Consider the following 204-residue polypeptide: ATP phosphoribosyltransferase (204 aa).

It belongs to the ATP phosphoribosyltransferase family. Short subfamily. As to quaternary structure, heteromultimer composed of HisG and HisZ subunits.

Its subcellular location is the cytoplasm. It catalyses the reaction 1-(5-phospho-beta-D-ribosyl)-ATP + diphosphate = 5-phospho-alpha-D-ribose 1-diphosphate + ATP. The protein operates within amino-acid biosynthesis; L-histidine biosynthesis; L-histidine from 5-phospho-alpha-D-ribose 1-diphosphate: step 1/9. Its function is as follows. Catalyzes the condensation of ATP and 5-phosphoribose 1-diphosphate to form N'-(5'-phosphoribosyl)-ATP (PR-ATP). Has a crucial role in the pathway because the rate of histidine biosynthesis seems to be controlled primarily by regulation of HisG enzymatic activity. The polypeptide is ATP phosphoribosyltransferase (Staphylococcus aureus (strain USA300)).